The following is a 297-amino-acid chain: 4-diphosphocytidyl-2-C-methyl-D-erythritol kinase (297 aa).

Lys6 is an active-site residue. 94-104 (PVAGGMAGGSA) is an ATP binding site. Asp136 is a catalytic residue.

Belongs to the GHMP kinase family. IspE subfamily.

It carries out the reaction 4-CDP-2-C-methyl-D-erythritol + ATP = 4-CDP-2-C-methyl-D-erythritol 2-phosphate + ADP + H(+). It functions in the pathway isoprenoid biosynthesis; isopentenyl diphosphate biosynthesis via DXP pathway; isopentenyl diphosphate from 1-deoxy-D-xylulose 5-phosphate: step 3/6. Functionally, catalyzes the phosphorylation of the position 2 hydroxy group of 4-diphosphocytidyl-2C-methyl-D-erythritol. This Nocardioides sp. (strain ATCC BAA-499 / JS614) protein is 4-diphosphocytidyl-2-C-methyl-D-erythritol kinase.